The sequence spans 86 residues: Translation machinery-associated protein 10 (86 aa).

Residues S28 and S79 each carry the phosphoserine modification. The segment at 63-86 (NKTRRGSNSQNNERRLSDLQQYHI) is disordered.

The protein belongs to the STF2 family. As to quaternary structure, associates with ribosomes.

It is found in the cytoplasm. It localises to the nucleus. May be involved in inhibition of the reverse ATPase reaction of mitochondrial F(1)F(0)-type ATP synthase. The protein is Translation machinery-associated protein 10 of Saccharomyces cerevisiae (strain ATCC 204508 / S288c) (Baker's yeast).